Reading from the N-terminus, the 345-residue chain is MVVDDSAVVRQVVAGLLADDPAIEVIAAVADPILAIARMKVQWPDVFVLDIEMPRMDGITFLKKIMAERPTPVVICSTLTEKGAQTSMAALSAGAVAIITKPKLGLKQFLVDASDDLISAVKAAARANVKRLQVVEKLTADAILPASDRHDAMLQTTERVVALGTSTGGTQALEVVLTALPRVTPGIVIVQHMPEKFTAEFANRLNGLCQITVREAKNNDRVVPGRALIAPGGKHMLLRRNGAQYSVEVLDGPLVNRHRPSVDVLFRSVARCAGANALGVIMTGMGDDGAAGLAEMRKAGARTLAQDEESCVVYGMPKEAVKRGGVERSVPLGAIAREIMAQMAG.

One can recognise a Response regulatory domain in the interval 1–116; the sequence is MVVDDSAVVR…KQFLVDASDD (116 aa). D50 is modified (4-aspartylphosphate). Residues 154-345 enclose the CheB-type methylesterase domain; it reads LQTTERVVAL…AREIMAQMAG (192 aa). Active-site residues include S166, H192, and D288.

The protein belongs to the CheB family. Phosphorylated by CheA. Phosphorylation of the N-terminal regulatory domain activates the methylesterase activity.

It is found in the cytoplasm. It catalyses the reaction [protein]-L-glutamate 5-O-methyl ester + H2O = L-glutamyl-[protein] + methanol + H(+). It carries out the reaction L-glutaminyl-[protein] + H2O = L-glutamyl-[protein] + NH4(+). Functionally, involved in chemotaxis. Part of a chemotaxis signal transduction system that modulates chemotaxis in response to various stimuli. Catalyzes the demethylation of specific methylglutamate residues introduced into the chemoreceptors (methyl-accepting chemotaxis proteins or MCP) by CheR. Also mediates the irreversible deamidation of specific glutamine residues to glutamic acid. The sequence is that of Protein-glutamate methylesterase/protein-glutamine glutaminase 2 from Albidiferax ferrireducens (strain ATCC BAA-621 / DSM 15236 / T118) (Rhodoferax ferrireducens).